Consider the following 625-residue polypeptide: MSDIIHLLPDSVANQIAAGEVIQRPASVIKELVENAIDAEAQNIHVLVTDAGKTCIQVIDDGKGMSETDARLSFERHATSKIREASDLFALRTMGFRGEALASIAAVAQVELKTRPESEELGTKIIIAGSKVESQEAVSCPKGSNFSIKNLFFNIPARRKFLKANSTELSNILAEFERIALVHPEVAFSLYSNDSELFNLPACHLRQRILSVFGKKLNQQLLSVEVNTTMVKVSGYVAKPETARKKGAHQYFFVNGRYMRHPYFHKAVMDAYEQLIPAGEQISYFIYFEVDPANIDVNIHPTKTEIKFENEQAIWQILSASIKESLGKFNAVPSIDFDTEDMPDIPAFEQNLPPAPPKVHFNSDFNPFKPSSSSGGGNYSRPKVDWEDLYGGLEKASKMNQPFSDSDPESEEFAVIEEESIATAAPETLYAGELAVIEKGTQHLQFKGRFILTSVKSGLMLIDQHRAHIRVLFDRYRAQIQQKQGFSQGVLFPEILQLPASEAAVLQSIMDDLSAVGFDLSDLGGGSYAINGVPSGIDGLNPVDLVRSMLHTAMEKGNDVKEEIQDILALTLARAAAIVYGQVLSNEEMVSLVDNLFACPSPNYTPDGRVVLTTIKEEEIDKLFR.

Belongs to the DNA mismatch repair MutL/HexB family.

Its function is as follows. This protein is involved in the repair of mismatches in DNA. It is required for dam-dependent methyl-directed DNA mismatch repair. May act as a 'molecular matchmaker', a protein that promotes the formation of a stable complex between two or more DNA-binding proteins in an ATP-dependent manner without itself being part of a final effector complex. This is DNA mismatch repair protein MutL from Bacteroides fragilis (strain YCH46).